The sequence spans 85 residues: Cell division topological specificity factor (85 aa).

Belongs to the MinE family.

Prevents the cell division inhibition by proteins MinC and MinD at internal division sites while permitting inhibition at polar sites. This ensures cell division at the proper site by restricting the formation of a division septum at the midpoint of the long axis of the cell. The sequence is that of Cell division topological specificity factor from Cellvibrio japonicus (strain Ueda107) (Pseudomonas fluorescens subsp. cellulosa).